The chain runs to 288 residues: 2-methoxy-6-polyprenyl-1,4-benzoquinol methylase, mitochondrial (288 aa).

Residues M1–H27 constitute a mitochondrion transit peptide. Residues T94, D130, and D160–A161 each bind S-adenosyl-L-methionine.

It belongs to the class I-like SAM-binding methyltransferase superfamily. MenG/UbiE family. Component of a multi-subunit COQ enzyme complex.

The protein resides in the mitochondrion inner membrane. It carries out the reaction a 2-methoxy-6-(all-trans-polyprenyl)benzene-1,4-diol + S-adenosyl-L-methionine = a 5-methoxy-2-methyl-3-(all-trans-polyprenyl)benzene-1,4-diol + S-adenosyl-L-homocysteine + H(+). It functions in the pathway cofactor biosynthesis; ubiquinone biosynthesis. Methyltransferase required for the conversion of 2-polyprenyl-6-methoxy-1,4-benzoquinol (DDMQH2) to 2-polyprenyl-3-methyl-6-methoxy-1,4-benzoquinol (DMQH2). In Arabidopsis thaliana (Mouse-ear cress), this protein is 2-methoxy-6-polyprenyl-1,4-benzoquinol methylase, mitochondrial.